The primary structure comprises 338 residues: Activator of 90 kDa heat shock protein ATPase homolog 1 (338 aa).

K3 carries the N6-acetyllysine modification. Residue K182 forms a Glycyl lysine isopeptide (Lys-Gly) (interchain with G-Cter in SUMO1) linkage. S193 carries the phosphoserine modification. A Glycyl lysine isopeptide (Lys-Gly) (interchain with G-Cter in SUMO2) cross-link involves residue K203. K212 is modified (N6-acetyllysine). Y223 is modified (phosphotyrosine; by ABL).

This sequence belongs to the AHA1 family. In terms of assembly, interacts with HSPCA/HSP90. Interacts with HSP90AA1; the interaction activates HSP90AA1 ATPase activity. Interacts with HSP90AB1. Interacts with GCH1. Interacts with SRPK1. Interacts with FLCN. Post-translationally, phosphorylation at Tyr-223 enhances binding to chaperone HSP90AA1.

It is found in the cytoplasm. The protein localises to the cytosol. The protein resides in the endoplasmic reticulum. Its function is as follows. Acts as a co-chaperone of HSP90AA1. Activates the ATPase activity of HSP90AA1 leading to increase in its chaperone activity. Competes with the inhibitory co-chaperone FNIP1 for binding to HSP90AA1, thereby providing a reciprocal regulatory mechanism for chaperoning of client proteins. Competes with the inhibitory co-chaperone TSC1 for binding to HSP90AA1, thereby providing a reciprocal regulatory mechanism for chaperoning of client proteins. This Mus musculus (Mouse) protein is Activator of 90 kDa heat shock protein ATPase homolog 1 (Ahsa1).